The following is a 295-amino-acid chain: MMRILLFVATNLAVVLVASITLSLFGFNGFMAANGVDLNLSSLLVFCAVFGFAGSLVSLFISKWMAKMTTGTQIISQPRTRHEQWLLQTVEELSREAGIKMPEVGIFPAYEANAFATGWNRNDALVAVSQGLLERFSPDEVRAVLAHEIGHVANGDMVTLALVQGVVNTFVMFFARIIGNFVDKVIFKNEEGQGIAYYVATIVAELILGILASMIVMWFSRRREFRADEAGAQLAGTAAMIGALQRLRVEQGLPVHMPDTMKAFGINGGLKHGLAGLLMSHPPLEDRIEALRQRG.

The next 2 helical transmembrane spans lie at 4–24 (ILLF…TLSL) and 41–61 (SSLL…SLFI). Histidine 147 is a binding site for Zn(2+). Glutamate 148 is a catalytic residue. Histidine 151 is a binding site for Zn(2+). 2 helical membrane passes run 158 to 178 (VTLA…ARII) and 199 to 219 (VATI…VMWF). Residue glutamate 224 participates in Zn(2+) binding.

Belongs to the peptidase M48B family. The cofactor is Zn(2+).

The protein resides in the cell inner membrane. This chain is Protease HtpX, found in Pseudomonas putida (strain ATCC 47054 / DSM 6125 / CFBP 8728 / NCIMB 11950 / KT2440).